Reading from the N-terminus, the 148-residue chain is Lysozyme C-2 (148 aa).

A signal peptide spans 1-18; it reads MKTLLTLGLLLLSVTAQA. The 130-residue stretch at 19–148 folds into the C-type lysozyme domain; it reads KVYERCEFAR…LSQYIRNCGV (130 aa). 4 disulfides stabilise this stretch: C24/C146, C48/C134, C83/C99, and C95/C113. Active-site residues include E53 and D71.

The protein belongs to the glycosyl hydrolase 22 family. In terms of assembly, monomer. Expressed weakly in myeloblasts, moderately in immature macrophages, and strongly in both mature macrophages and macrophage-rich tissues.

It is found in the secreted. The enzyme catalyses Hydrolysis of (1-&gt;4)-beta-linkages between N-acetylmuramic acid and N-acetyl-D-glucosamine residues in a peptidoglycan and between N-acetyl-D-glucosamine residues in chitodextrins.. In terms of biological role, lysozymes have primarily a bacteriolytic function; those in tissues and body fluids are associated with the monocyte-macrophage system and enhance the activity of immunoagents. Lyz2 is active against a range of Gram-positive and Gram-negative bacteria. More effective than Lyz1 in killing Gram-negative bacteria. Lyz1 and Lyz2 are equally effective in killing Gram-positive bacteria. This chain is Lysozyme C-2 (Lyz2), found in Mus musculus (Mouse).